Consider the following 30-residue polypeptide: Snaclec coagulation factor IX/factor X-binding protein subunit A (30 aa).

In terms of domain architecture, C-type lectin spans 1 to 30; that stretch reads DCPSDWSPYEGHCYKHFIKWMNNEDAERFC. Residues cysteine 2 and cysteine 13 are joined by a disulfide bond.

This sequence belongs to the snaclec family. Heterodimer of subunits A and B; disulfide-linked. As to expression, expressed by the venom gland.

It localises to the secreted. Its function is as follows. Anticoagulant protein which binds to the gamma-carboxyglutamic acid-domain regions of factors IX (F9) and factor X (F10) in the presence of calcium with a 1 to 1 stoichiometry. In Bothrops jararaca (Jararaca), this protein is Snaclec coagulation factor IX/factor X-binding protein subunit A.